A 282-amino-acid polypeptide reads, in one-letter code: Pantothenate synthetase (282 aa).

An ATP-binding site is contributed by 30–37; sequence MGYLHEGH. His37 serves as the catalytic Proton donor. Gln61 is a (R)-pantoate binding site. Gln61 serves as a coordination point for beta-alanine. ATP is bound at residue 147–150; the sequence is GMKD. Gln153 is a binding site for (R)-pantoate. ATP contacts are provided by residues Val176 and 184–187; that span reads KSSR.

It belongs to the pantothenate synthetase family. Homodimer.

It is found in the cytoplasm. It carries out the reaction (R)-pantoate + beta-alanine + ATP = (R)-pantothenate + AMP + diphosphate + H(+). The protein operates within cofactor biosynthesis; (R)-pantothenate biosynthesis; (R)-pantothenate from (R)-pantoate and beta-alanine: step 1/1. Catalyzes the condensation of pantoate with beta-alanine in an ATP-dependent reaction via a pantoyl-adenylate intermediate. In Bacillus cereus (strain B4264), this protein is Pantothenate synthetase.